The chain runs to 274 residues: Thymidylate synthase (274 aa).

Arginine 21 contributes to the dUMP binding site. Residue histidine 51 coordinates (6R)-5,10-methylene-5,6,7,8-tetrahydrofolate. Arginine 123–arginine 124 contacts dUMP. Residue cysteine 156 is the Nucleophile of the active site. Residues arginine 176–aspartate 179, asparagine 187, and histidine 217–tyrosine 219 contribute to the dUMP site. Aspartate 179 lines the (6R)-5,10-methylene-5,6,7,8-tetrahydrofolate pocket. Residue serine 273 coordinates (6R)-5,10-methylene-5,6,7,8-tetrahydrofolate.

Belongs to the thymidylate synthase family. Bacterial-type ThyA subfamily. As to quaternary structure, homodimer.

The protein localises to the cytoplasm. It catalyses the reaction dUMP + (6R)-5,10-methylene-5,6,7,8-tetrahydrofolate = 7,8-dihydrofolate + dTMP. It participates in pyrimidine metabolism; dTTP biosynthesis. Its function is as follows. Catalyzes the reductive methylation of 2'-deoxyuridine-5'-monophosphate (dUMP) to 2'-deoxythymidine-5'-monophosphate (dTMP) while utilizing 5,10-methylenetetrahydrofolate (mTHF) as the methyl donor and reductant in the reaction, yielding dihydrofolate (DHF) as a by-product. This enzymatic reaction provides an intracellular de novo source of dTMP, an essential precursor for DNA biosynthesis. The sequence is that of Thymidylate synthase from Francisella tularensis subsp. tularensis (strain SCHU S4 / Schu 4).